We begin with the raw amino-acid sequence, 323 residues long: Arginase (323 aa).

Histidine 119, aspartate 142, histidine 144, and aspartate 146 together coordinate Mn(2+). Substrate contacts are provided by residues 144-148 (HADIN), 155-157 (SKN), and aspartate 198. 2 residues coordinate Mn(2+): aspartate 247 and aspartate 249. Positions 261 and 292 each coordinate substrate.

The protein belongs to the arginase family. Homotrimer. It depends on Mn(2+) as a cofactor.

It catalyses the reaction L-arginine + H2O = urea + L-ornithine. Its pathway is nitrogen metabolism; urea cycle; L-ornithine and urea from L-arginine: step 1/1. This Schizosaccharomyces pombe (strain 972 / ATCC 24843) (Fission yeast) protein is Arginase (aru1).